A 608-amino-acid chain; its full sequence is Isocitrate dehydrogenase kinase/phosphatase (608 aa).

ATP is bound by residues 327–333 and lysine 348; that span reads APGIKGL. The active site involves aspartate 383.

Belongs to the AceK family.

Its subcellular location is the cytoplasm. It carries out the reaction L-seryl-[isocitrate dehydrogenase] + ATP = O-phospho-L-seryl-[isocitrate dehydrogenase] + ADP + H(+). Functionally, bifunctional enzyme which can phosphorylate or dephosphorylate isocitrate dehydrogenase (IDH) on a specific serine residue. This is a regulatory mechanism which enables bacteria to bypass the Krebs cycle via the glyoxylate shunt in response to the source of carbon. When bacteria are grown on glucose, IDH is fully active and unphosphorylated, but when grown on acetate or ethanol, the activity of IDH declines drastically concomitant with its phosphorylation. The sequence is that of Isocitrate dehydrogenase kinase/phosphatase from Burkholderia ambifaria (strain ATCC BAA-244 / DSM 16087 / CCUG 44356 / LMG 19182 / AMMD) (Burkholderia cepacia (strain AMMD)).